Consider the following 72-residue polypeptide: Mitochondrial import receptor subunit TOM7-1 (72 aa).

Topologically, residues 2 to 41 (LKPKGKNTKKAAAADEDDGAVAVVGKFVKEWGTWTAKKAK) are cytoplasmic. A helical transmembrane segment spans residues 42 to 59 (VITHYGFIPLVIIIGMNS). Topologically, residues 60 to 72 (EPKPSLSQLLSPV) are mitochondrial intermembrane.

This sequence belongs to the Tom7 family. In terms of assembly, forms part of the preprotein translocase complex of the outer mitochondrial membrane (TOM complex).

It is found in the mitochondrion outer membrane. In terms of biological role, seems to act as a modulator of the dynamics of the mitochondrial protein transport machinery. Seems to promote the dissociation of subunits of the outer membrane translocase. In Solanum tuberosum (Potato), this protein is Mitochondrial import receptor subunit TOM7-1 (TOM7-1).